We begin with the raw amino-acid sequence, 428 residues long: Enolase (428 aa).

Q163 is a binding site for (2R)-2-phosphoglycerate. E205 (proton donor) is an active-site residue. Mg(2+) contacts are provided by D242, E285, and D312. 4 residues coordinate (2R)-2-phosphoglycerate: K337, R366, S367, and K388. The Proton acceptor role is filled by K337.

It belongs to the enolase family. The cofactor is Mg(2+).

The protein localises to the cytoplasm. Its subcellular location is the secreted. It is found in the cell surface. The enzyme catalyses (2R)-2-phosphoglycerate = phosphoenolpyruvate + H2O. It functions in the pathway carbohydrate degradation; glycolysis; pyruvate from D-glyceraldehyde 3-phosphate: step 4/5. Catalyzes the reversible conversion of 2-phosphoglycerate (2-PG) into phosphoenolpyruvate (PEP). It is essential for the degradation of carbohydrates via glycolysis. The sequence is that of Enolase from Rhodopirellula baltica (strain DSM 10527 / NCIMB 13988 / SH1).